Consider the following 425-residue polypeptide: MQQIFFKDPILGEVLFDQQTKWMYELVETEAFRRLRNIKQLGINFHFYPGGVHTRYSHSLGVYELLRRILNTPAFAPIDENKKQTVLVAGLLHDIGHAPHSHAFEIYFAKAPNFKKELFIHEEVTTLFVNSEPIKSILKANQIDPKLVAALIDENKELKPSNYWMRQLISSDLDADRMDYLLRDSYFTGTSHSLIDYQTIIKEMDCVKVKGIYEIFFKDKCLPLIENFLITRHHMYQSIYSDGRSISTELNLWFVFQRIKDLVDKNQFDFNGYKTLEQVCLPLLKNEHFDKKMLPAFVKLDDYVFQSFFVNLYQTTKDKILKKLLDSYLNSLKFEIKFYETKEQRDLDFEKQASKYKDAKYFITKFNNQFKGFYEGWSSHKNELKIKTMQNKHTNLSEISMLVKRSNELFFENALYKWANVFYRL.

The region spanning 55 to 181 is the HD domain; that stretch reads RYSHSLGVYE…DLDADRMDYL (127 aa).

This is an uncharacterized protein from Mycoplasma pneumoniae (strain ATCC 29342 / M129 / Subtype 1) (Mycoplasmoides pneumoniae).